Consider the following 361-residue polypeptide: Ankyrin repeat domain-containing protein 16 (361 aa).

ANK repeat units follow at residues 36-66, 70-99, 103-132, 136-165, 170-200, 204-233, 238-268, 273-302, and 306-335; these read AGDT…DIEA, DYKR…VVDS, ADWT…NPLL, DGWN…DAWK, IRRT…EPDC, CGVT…ACSS, MGAQ…DVDV, SQLT…DINS, and RNRS…KDSE.

In terms of assembly, interacts with AARS; the interaction is direct. As to expression, widely expressed in brain (at protein level).

Its subcellular location is the cytoplasm. The protein localises to the nucleus. Its function is as follows. Required to prevent the misactivation of serine (Ser) with tRNA(Ala) by promoting the hydrolysis of Ser-mischarged tRNA(Ala), thereby playing a role in translational fidelity. Binds directly to the catalytic domain of AARS/AlaRS and captures Ser that is misactivated by AARS/AlaRS, preventing the charging of Ser adenylates to tRNA(Ala) and precluding Ser misincorporation in nascent peptides. The protein is Ankyrin repeat domain-containing protein 16 of Mus musculus (Mouse).